Consider the following 173-residue polypeptide: MKFSQILVLAAIAVAAISAQDAAPATTPDTATATTPAAATTTTTTTTPAADAGTASTEQTTTAGPEAAGATNGTTTTPPADGTQTATAPLDATATEESSASGEMTPTVGTDTSDQVSDSTAAGPSTPEGSMTGTSTPKASDSSSSATDTTSGASHTTMAVACATVMTVGAYFL.

A compositionally biased stretch (low complexity) spans 22–89 (AAPATTPDTA…ADGTQTATAP (68 aa)). Residues 22–155 (AAPATTPDTA…ATDTTSGASH (134 aa)) are disordered. Residues 95-133 (TEESSASGEMTPTVGTDTSDQVSDSTAAGPSTPEGSMTG) show a composition bias toward polar residues. Over residues 134–155 (TSTPKASDSSSSATDTTSGASH) the composition is skewed to low complexity.

As to expression, germinating spores.

Its function is as follows. Could be a structural protein required for the infection process of B.lactucae. In Bremia lactucae (Lettuce downy mildew), this protein is HAM34 protein (HAM34).